The chain runs to 669 residues: Elongation factor G-like protein (669 aa).

The region spanning E7–S279 is the tr-type G domain. The interval G16 to T23 is G1. A GTP-binding site is contributed by G16–T23. The interval Q59–E63 is G2. The G3 stretch occupies residues D80 to G83. GTP-binding positions include D80 to S84 and N134 to D137. The tract at residues N134–D137 is G4. A G5 region spans residues A257 to E259.

This sequence belongs to the TRAFAC class translation factor GTPase superfamily. Classic translation factor GTPase family. EF-G/EF-2 subfamily.

This Synechocystis sp. (strain ATCC 27184 / PCC 6803 / Kazusa) protein is Elongation factor G-like protein.